Consider the following 477-residue polypeptide: Glutamate--tRNA ligase 2 (477 aa).

The short motif at 12–22 is the 'HIGH' region element; the sequence is PSPTGRMHLGN. Zn(2+)-binding residues include C109, C111, C136, and H138. Positions 253 to 257 match the 'KMSKS' region motif; sequence PLSKR. K256 lines the ATP pocket.

This sequence belongs to the class-I aminoacyl-tRNA synthetase family. Glutamate--tRNA ligase type 1 subfamily. As to quaternary structure, monomer. Zn(2+) serves as cofactor.

The protein localises to the cytoplasm. The enzyme catalyses tRNA(Glu) + L-glutamate + ATP = L-glutamyl-tRNA(Glu) + AMP + diphosphate. Its function is as follows. Catalyzes the attachment of glutamate to tRNA(Glu) in a two-step reaction: glutamate is first activated by ATP to form Glu-AMP and then transferred to the acceptor end of tRNA(Glu). This is Glutamate--tRNA ligase 2 from Alkalilimnicola ehrlichii (strain ATCC BAA-1101 / DSM 17681 / MLHE-1).